Reading from the N-terminus, the 621-residue chain is Anthranilate synthase alpha subunit 2, chloroplastic (621 aa).

The transit peptide at 1–87 directs the protein to the chloroplast; it reads MSAVSISAVK…SEEQFTKFKK (87 aa).

Belongs to the anthranilate synthase component I family. Heterotetramer consisting of two non-identical subunits: a beta subunit and a large alpha subunit.

Its subcellular location is the plastid. It localises to the chloroplast. It catalyses the reaction chorismate + L-glutamine = anthranilate + pyruvate + L-glutamate + H(+). It functions in the pathway amino-acid biosynthesis; L-tryptophan biosynthesis; L-tryptophan from chorismate: step 1/5. Feedback inhibition by tryptophan. In terms of biological role, part of a heterotetrameric complex that catalyzes the two-step biosynthesis of anthranilate, an intermediate in the biosynthesis of L-tryptophan. In the first step, the glutamine-binding beta subunit of anthranilate synthase (AS) provides the glutamine amidotransferase activity which generates ammonia as a substrate that, along with chorismate, is used in the second step, catalyzed by the large alpha subunit of AS to produce anthranilate. The sequence is that of Anthranilate synthase alpha subunit 2, chloroplastic (ASA2) from Arabidopsis thaliana (Mouse-ear cress).